The primary structure comprises 263 residues: Aminoglycoside 3'-phosphotransferase (263 aa).

Catalysis depends on Asp183, which acts as the Proton acceptor.

The protein belongs to the aminoglycoside phosphotransferase family.

It catalyses the reaction kanamycin A + ATP = kanamycin 3'-phosphate + ADP + H(+). Its function is as follows. Resistance to kanamycin and structurally-related aminoglycosides, including amikacin. In Streptomyces ribosidificus, this protein is Aminoglycoside 3'-phosphotransferase (rph).